The primary structure comprises 777 residues: Double zinc ribbon and ankyrin repeat-containing protein 1 (777 aa).

The span at 161-176 (QVGERTDPKTLKDLRF) shows a compositional bias: basic and acidic residues. The tract at residues 161–202 (QVGERTDPKTLKDLRFSESPLEIPAHSGGSGSRPPTRQSQSP) is disordered. Residues 193 to 202 (RPPTRQSQSP) show a composition bias toward polar residues. S201 is subject to Phosphoserine. 2 consecutive DZANK-type zinc fingers follow at residues 230–289 (CAHC…CVVC) and 358–406 (CSRC…GSCG). ANK repeat units lie at residues 442–473 (NIPLPRSDAGTKRDIGTQTVGLFYPSGKLLAK) and 477–506 (EIASQKQRQEKMSDHKPLLTAISPGRGYWR).

In terms of assembly, interacts with NINL. Associates with DYNC1H1 and multiple dynein intermediate and light chains as well as actin-binding proteins.

It is found in the cytoplasm. The protein localises to the cytoskeleton. It localises to the microtubule organizing center. Its subcellular location is the centrosome. The protein resides in the cilium basal body. Functionally, involved in vesicle transport in photoreceptor cells. This Macaca fascicularis (Crab-eating macaque) protein is Double zinc ribbon and ankyrin repeat-containing protein 1 (DZANK1).